A 1235-amino-acid chain; its full sequence is ATP-dependent helicase/nuclease subunit A (1235 aa).

One can recognise a UvrD-like helicase ATP-binding domain in the interval 3 to 471 (TKWTETQKSA…IKLSENFRSR (469 aa)). Position 24-31 (24-31 (AGAGTGKT)) interacts with ATP. The UvrD-like helicase C-terminal domain occupies 509 to 808 (PFEGNCGGDV…RIMSIHKSKG (300 aa)).

This sequence belongs to the helicase family. AddA subfamily. As to quaternary structure, heterodimer of AddA and AddB/RexB. The cofactor is Mg(2+).

The enzyme catalyses Couples ATP hydrolysis with the unwinding of duplex DNA by translocating in the 3'-5' direction.. The catalysed reaction is ATP + H2O = ADP + phosphate + H(+). The heterodimer acts as both an ATP-dependent DNA helicase and an ATP-dependent, dual-direction single-stranded exonuclease. Recognizes the chi site generating a DNA molecule suitable for the initiation of homologous recombination. The AddA nuclease domain is required for chi fragment generation; this subunit has the helicase and 3' -&gt; 5' nuclease activities. The polypeptide is ATP-dependent helicase/nuclease subunit A (Clostridium kluyveri (strain ATCC 8527 / DSM 555 / NBRC 12016 / NCIMB 10680 / K1)).